Here is a 204-residue protein sequence, read N- to C-terminus: Methylthioribulose-1-phosphate dehydratase (204 aa).

The Zn(2+) site is built by H94 and H96.

Belongs to the aldolase class II family. MtnB subfamily. The cofactor is Zn(2+).

The catalysed reaction is 5-(methylsulfanyl)-D-ribulose 1-phosphate = 5-methylsulfanyl-2,3-dioxopentyl phosphate + H2O. Its pathway is amino-acid biosynthesis; L-methionine biosynthesis via salvage pathway; L-methionine from S-methyl-5-thio-alpha-D-ribose 1-phosphate: step 2/6. In terms of biological role, catalyzes the dehydration of methylthioribulose-1-phosphate (MTRu-1-P) into 2,3-diketo-5-methylthiopentyl-1-phosphate (DK-MTP-1-P). The polypeptide is Methylthioribulose-1-phosphate dehydratase (Pseudomonas savastanoi pv. phaseolicola (strain 1448A / Race 6) (Pseudomonas syringae pv. phaseolicola (strain 1448A / Race 6))).